The chain runs to 133 residues: Ribosome-binding factor A (133 aa).

Belongs to the RbfA family. In terms of assembly, monomer. Binds 30S ribosomal subunits, but not 50S ribosomal subunits or 70S ribosomes.

It localises to the cytoplasm. Its function is as follows. One of several proteins that assist in the late maturation steps of the functional core of the 30S ribosomal subunit. Associates with free 30S ribosomal subunits (but not with 30S subunits that are part of 70S ribosomes or polysomes). Required for efficient processing of 16S rRNA. May interact with the 5'-terminal helix region of 16S rRNA. In Proteus mirabilis (strain HI4320), this protein is Ribosome-binding factor A.